Reading from the N-terminus, the 299-residue chain is Oxygen-dependent coproporphyrinogen-III oxidase (299 aa).

A substrate-binding site is contributed by serine 92. Residues histidine 96 and histidine 106 each coordinate Mn(2+). Histidine 106 functions as the Proton donor in the catalytic mechanism. A substrate-binding site is contributed by 108–110 (NVR). The Mn(2+) site is built by histidine 145 and histidine 175. Residues 240–275 (YVEFNLVWDRGTLFGLQTGGRTESILMSMPPLVRWE) form an important for dimerization region. 258 to 260 (GGR) contacts substrate.

It belongs to the aerobic coproporphyrinogen-III oxidase family. As to quaternary structure, homodimer. It depends on Mn(2+) as a cofactor.

The protein localises to the cytoplasm. It carries out the reaction coproporphyrinogen III + O2 + 2 H(+) = protoporphyrinogen IX + 2 CO2 + 2 H2O. Its pathway is porphyrin-containing compound metabolism; protoporphyrin-IX biosynthesis; protoporphyrinogen-IX from coproporphyrinogen-III (O2 route): step 1/1. Functionally, involved in the heme biosynthesis. Catalyzes the aerobic oxidative decarboxylation of propionate groups of rings A and B of coproporphyrinogen-III to yield the vinyl groups in protoporphyrinogen-IX. The chain is Oxygen-dependent coproporphyrinogen-III oxidase from Escherichia coli O7:K1 (strain IAI39 / ExPEC).